The primary structure comprises 348 residues: Galactose-1-phosphate uridylyltransferase (348 aa).

28–31 (RAKR) provides a ligand contact to UDP-alpha-D-glucose. Zn(2+) is bound by residues Cys-52 and Cys-55. UDP-alpha-D-glucose contacts are provided by residues Val-61 and 77–78 (ND). Position 115 (His-115) interacts with Zn(2+). Residues Asn-153 and 159-161 (GCS) each bind UDP-alpha-D-glucose. His-164 is a Zn(2+) binding site. His-166 serves as the catalytic Tele-UMP-histidine intermediate. A UDP-alpha-D-glucose-binding site is contributed by Gln-168. Fe cation contacts are provided by Glu-182, His-281, His-296, and His-298. UDP-alpha-D-glucose is bound by residues 311 to 312 (KF), 316 to 317 (YE), and Gln-323.

Belongs to the galactose-1-phosphate uridylyltransferase type 1 family. Requires Zn(2+) as cofactor.

It catalyses the reaction alpha-D-galactose 1-phosphate + UDP-alpha-D-glucose = alpha-D-glucose 1-phosphate + UDP-alpha-D-galactose. It participates in carbohydrate metabolism; galactose metabolism. This is Galactose-1-phosphate uridylyltransferase (galT) from Salmonella typhimurium (strain LT2 / SGSC1412 / ATCC 700720).